The following is a 200-amino-acid chain: FMN-dependent NADH:quinone oxidoreductase (200 aa).

FMN-binding positions include S10, 96–99 (MYNF), and 140–143 (SRGG).

This sequence belongs to the azoreductase type 1 family. Homodimer. Requires FMN as cofactor.

It carries out the reaction 2 a quinone + NADH + H(+) = 2 a 1,4-benzosemiquinone + NAD(+). It catalyses the reaction N,N-dimethyl-1,4-phenylenediamine + anthranilate + 2 NAD(+) = 2-(4-dimethylaminophenyl)diazenylbenzoate + 2 NADH + 2 H(+). Quinone reductase that provides resistance to thiol-specific stress caused by electrophilic quinones. In terms of biological role, also exhibits azoreductase activity. Catalyzes the reductive cleavage of the azo bond in aromatic azo compounds to the corresponding amines. The polypeptide is FMN-dependent NADH:quinone oxidoreductase (Photorhabdus laumondii subsp. laumondii (strain DSM 15139 / CIP 105565 / TT01) (Photorhabdus luminescens subsp. laumondii)).